Reading from the N-terminus, the 220-residue chain is Inner kinetochore subunit fta3 (220 aa).

This sequence belongs to the CENP-H/MCM16 family. Component of the inner kinetochore constitutive centromere-associated network (CCAN) (also known as central kinetochore Sim4 complex in fission yeast), which is composed of at least cnl2, cnp3, cnp20, fta1, fta2, fta3, fta4, fta6, fta7, mal2, mhf1, mhf2, mis6, mis15, mis17, sim4 and wip1.

The protein resides in the nucleus. Its subcellular location is the chromosome. The protein localises to the centromere. It is found in the kinetochore. In terms of biological role, component of the kinetochore, a multiprotein complex that assembles on centromeric DNA and attaches chromosomes to spindle microtubules, mediating chromosome segregation and sister chromatid segregation during meiosis and mitosis. Component of the inner kinetochore constitutive centromere-associated network (CCAN), which serves as a structural platform for outer kinetochore assembly. Fta2, fta3 and fta4 associate with the central core (cnt) and inner repeat (inr) region of the centromere. The sequence is that of Inner kinetochore subunit fta3 (fta3) from Schizosaccharomyces pombe (strain 972 / ATCC 24843) (Fission yeast).